We begin with the raw amino-acid sequence, 506 residues long: Maturase K (506 aa).

It belongs to the intron maturase 2 family. MatK subfamily.

It localises to the plastid. Its subcellular location is the chloroplast. Usually encoded in the trnK tRNA gene intron. Probably assists in splicing its own and other chloroplast group II introns. This is Maturase K from Trifolium spumosum (Mediterranean clover).